A 123-amino-acid chain; its full sequence is PTS system glucitol/sorbitol-specific EIIA component (123 aa).

In terms of domain architecture, PTS EIIA type-5 spans Val3–Leu116. His43 serves as the catalytic Tele-phosphohistidine intermediate. At His43 the chain carries Phosphohistidine; by HPr.

It is found in the cytoplasm. Functionally, the phosphoenolpyruvate-dependent sugar phosphotransferase system (sugar PTS), a major carbohydrate active transport system, catalyzes the phosphorylation of incoming sugar substrates concomitantly with their translocation across the cell membrane. The enzyme II complex composed of SrlA, SrlB and SrlE is involved in glucitol/sorbitol transport. It can also use D-mannitol. In Escherichia coli (strain K12), this protein is PTS system glucitol/sorbitol-specific EIIA component (srlB).